Consider the following 166-residue polypeptide: HTH-type transcriptional regulator PrsX (166 aa).

Positions 25 to 159 constitute an HTH marR-type domain; it reads EHLLMQLCIR…FEVINKKLLA (135 aa).

The protein resides in the cytoplasm. The sequence is that of HTH-type transcriptional regulator PrsX (prsX) from Escherichia coli O6:H1 (strain CFT073 / ATCC 700928 / UPEC).